A 132-amino-acid chain; its full sequence is Small ribosomal subunit protein uS8 (132 aa).

It belongs to the universal ribosomal protein uS8 family. Part of the 30S ribosomal subunit. Contacts proteins S5 and S12.

Functionally, one of the primary rRNA binding proteins, it binds directly to 16S rRNA central domain where it helps coordinate assembly of the platform of the 30S subunit. The protein is Small ribosomal subunit protein uS8 of Rubrobacter xylanophilus (strain DSM 9941 / JCM 11954 / NBRC 16129 / PRD-1).